The chain runs to 365 residues: MADGGASPAQQEGEMSAAGPGLRRERQHRGSGRPPSARDLQLALAELYEDEAKRQSLRSDKPTTTKMSNSKGLKIDSFRSLRKPERSMSDDKENQRFYSGDSEYRGLQIWGASNNPSKIVAELFKEAKEHGAVPLDEASRTSGDFSKAKSFSGGGYRLGDSSQKHSEYIYGENQDVQILLKLWRNGFSLDDGELRSYSDPINAQFLESVKRGEIPVDLQRLVHGGQVNLDMEDHQEQEYVKPRLRFKAFSGEGQKLGSLTPEIVSTPSSPEEEDKSILNAPVLIDDSVPATKIQIRLADGSRLIQRFNQTHRIKDIRDFIIQSRPAFATTDFVLVTTFPNKELTDESLTLREADILNTVILQQLK.

Positions 1-97 (MADGGASPAQ…MSDDKENQRF (97 aa)) are disordered. Basic and acidic residues-rich tracts occupy residues 50–63 (DEAK…DKPT) and 73–95 (LKID…KENQ). Residues 175-240 (DVQILLKLWR…MEDHQEQEYV (66 aa)) form the SEP domain. The UBX domain occupies 286–363 (DSVPATKIQI…DILNTVILQQ (78 aa)).

The protein belongs to the NSFL1C family.

The protein resides in the nucleus. It is found in the cytoplasm. The protein localises to the cytosol. Its subcellular location is the endoplasmic reticulum. It localises to the golgi apparatus. The protein resides in the cytoskeleton. It is found in the microtubule organizing center. The protein localises to the centrosome. Functionally, adapter protein required for Golgi and endoplasmic reticulum biogenesis. Involved in Golgi and endoplasmic reticulum maintenance during interphase and in their reassembly at the end of mitosis. Regulates the centrosomal levels of kinase AURKA/Aurora A during mitotic progression by promoting AURKA removal from centrosomes in prophase. Also, regulates spindle orientation during mitosis. The sequence is that of UBX domain-containing protein 2B (UBXN2B) from Gallus gallus (Chicken).